We begin with the raw amino-acid sequence, 433 residues long: Glutamate-1-semialdehyde 2,1-aminomutase (433 aa).

Position 270 is an N6-(pyridoxal phosphate)lysine (K270).

Belongs to the class-III pyridoxal-phosphate-dependent aminotransferase family. HemL subfamily. As to quaternary structure, homodimer. The cofactor is pyridoxal 5'-phosphate.

The protein localises to the cytoplasm. It carries out the reaction (S)-4-amino-5-oxopentanoate = 5-aminolevulinate. It functions in the pathway porphyrin-containing compound metabolism; protoporphyrin-IX biosynthesis; 5-aminolevulinate from L-glutamyl-tRNA(Glu): step 2/2. This Clostridium novyi (strain NT) protein is Glutamate-1-semialdehyde 2,1-aminomutase.